The primary structure comprises 189 residues: Apolipoprotein D (189 aa).

Residues 1–20 form the signal peptide; sequence MGMMLLLLSMLAGLVAEAEG. Gln21 bears the Pyrrolidone carboxylic acid mark. Intrachain disulfides connect Cys28–Cys134 and Cys61–Cys185. 2 N-linked (GlcNAc...) asparagine glycosylation sites follow: Asn65 and Asn98.

It belongs to the calycin superfamily. Lipocalin family. In terms of assembly, homodimer.

It localises to the secreted. Its function is as follows. APOD occurs in the macromolecular complex with lecithin-transport and binding of bilin. Appears to be able to transport a variety of ligands in a number of different contexts. This is Apolipoprotein D (APOD) from Cavia porcellus (Guinea pig).